We begin with the raw amino-acid sequence, 390 residues long: tRNA-specific 2-thiouridylase MnmA (390 aa).

ATP is bound by residues 33–40 and Met-59; that span reads AMSGGVDS. Cys-131 (nucleophile) is an active-site residue. A disulfide bond links Cys-131 and Cys-230. An ATP-binding site is contributed by Gly-155. The tract at residues 180-182 is interaction with tRNA; the sequence is KDQ. The active-site Cysteine persulfide intermediate is Cys-230.

It belongs to the MnmA/TRMU family.

The protein resides in the cytoplasm. It catalyses the reaction S-sulfanyl-L-cysteinyl-[protein] + uridine(34) in tRNA + AH2 + ATP = 2-thiouridine(34) in tRNA + L-cysteinyl-[protein] + A + AMP + diphosphate + H(+). Its function is as follows. Catalyzes the 2-thiolation of uridine at the wobble position (U34) of tRNA, leading to the formation of s(2)U34. This is tRNA-specific 2-thiouridylase MnmA from Symbiobacterium thermophilum (strain DSM 24528 / JCM 14929 / IAM 14863 / T).